Here is a 301-residue protein sequence, read N- to C-terminus: Sulfate adenylyltransferase subunit 2 (301 aa).

Belongs to the PAPS reductase family. CysD subfamily. Heterodimer composed of CysD, the smaller subunit, and CysN.

The enzyme catalyses sulfate + ATP + H(+) = adenosine 5'-phosphosulfate + diphosphate. Its pathway is sulfur metabolism; hydrogen sulfide biosynthesis; sulfite from sulfate: step 1/3. Functionally, with CysN forms the ATP sulfurylase (ATPS) that catalyzes the adenylation of sulfate producing adenosine 5'-phosphosulfate (APS) and diphosphate, the first enzymatic step in sulfur assimilation pathway. APS synthesis involves the formation of a high-energy phosphoric-sulfuric acid anhydride bond driven by GTP hydrolysis by CysN coupled to ATP hydrolysis by CysD. This is Sulfate adenylyltransferase subunit 2 from Shewanella woodyi (strain ATCC 51908 / MS32).